The chain runs to 934 residues: Progesterone receptor (934 aa).

The disordered stretch occupies residues 1–49 (MTELKSKGPRAPHVAGGPPSPEVGSPLLCRPAAGPFQGSQTSDTLPEVS). The interval 1–164 (MTELKSKGPR…PATQRVLSPL (164 aa)) is AF3; mediates transcriptional activation. Residues 1 to 567 (MTELKSKGPR…YSFESLPQKI (567 aa)) form a modulating, Pro-Rich region. At Ser20 the chain carries Phosphoserine. The LXXL motif 1 signature appears at 55–59 (LDGLL). Residues 61–239 (PRLCQGQDPP…EDSAGPLLKG (179 aa)) form a disordered region. Position 81 is a phosphoserine (Ser81). Positions 115–119 (LDTLL) match the LXXL motif 2 motif. Phosphoserine occurs at positions 130 and 162. Residues 165 to 305 (MSRSGGKTED…LATTMMDFIH (141 aa)) are mediates transcriptional transrepression. The short motif at 183 to 187 (KVLPR) is the Nuclear localization signal element. Ser190 is modified (phosphoserine). The span at 191–203 (PSRQLLLPTSGSP) shows a compositional bias: polar residues. Ser213 carries the phosphoserine modification. Residues 220–231 (EVEEEDGSESED) are compositionally biased toward acidic residues. At Ser294 the chain carries Phosphoserine; by MAPK1. The tract at residues 331–375 (GGAGAASAFAPPQSSPSASSTPVAVGDFPDCAYPPDAEPKDNAYP) is disordered. Low complexity predominate over residues 335 to 350 (AASAFAPPQSSPSASS). Ser345 is modified (phosphoserine; by MAPK). A Glycyl lysine isopeptide (Lys-Gly) (interchain with G-Cter in SUMO); alternate cross-link involves residue Lys388. Lys388 participates in a covalent cross-link: Glycyl lysine isopeptide (Lys-Gly) (interchain with G-Cter in ubiquitin); alternate. Ser400 carries the post-translational modification Phosphoserine; by CDK2. The segment at 415–454 (PDFPLGPPPQLPPRAPPSRPGEAAVTAAPASASVSSASSP) is disordered. A compositionally biased stretch (pro residues) spans 418 to 433 (PLGPPPQLPPRAPPSR). The span at 434–454 (PGEAAVTAAPASASVSSASSP) shows a compositional bias: low complexity. Positions 456 to 547 (STLECILYKA…VYPPYLNYLR (92 aa)) are AF1; mediates transcriptional activation. Lys532 is covalently cross-linked (Glycyl lysine isopeptide (Lys-Gly) (interchain with G-Cter in SUMO)). 2 consecutive NR C4-type zinc fingers follow at residues 568 to 588 (CLIC…CGSC) and 604 to 628 (CAGR…LRKC). Residues 568 to 640 (CLICGDEASG…AGMVLGGRKF (73 aa)) constitute a DNA-binding region (nuclear receptor). Ser677 carries the post-translational modification Phosphoserine. Residues 680–914 (QDIQLIPPLI…EFPEMMSEVI (235 aa)) form the NR LBD domain. An AF2; mediates transcriptional activation region spans residues 688 to 934 (LIKLLMSIEP…MVKPLLFHKK (247 aa)). Arg767 serves as a coordination point for progesterone.

The protein belongs to the nuclear hormone receptor family. As to quaternary structure, interacts with SMARD1 and UNC45A. Interacts with CUEDC2; the interaction promotes ubiquitination, decreases sumoylation, and represses transcriptional activity. Interacts with PIAS3; the interaction promotes sumoylation of PR in a hormone-dependent manner, inhibits DNA-binding, and alters nuclear export. Interacts with SP1; the interaction requires ligand-induced phosphorylation on Ser-345 by ERK1/2-MAPK. Interacts with PRMT2. Interacts with NCOA2 and NCOA1. Interacts with KLF9. Interacts with GTF2B. Post-translationally, phosphorylated on multiple serine sites. Several of these sites are hormone-dependent. Phosphorylation on Ser-294 is highly hormone-dependent and modulates ubiquitination and sumoylation on Lys-388. Phosphorylation on Ser-345 also requires induction by hormone. Basal phosphorylation on Ser-81, Ser-162, Ser-190 and Ser-400 is increased in response to progesterone and can be phosphorylated in vitro by the CDK2-A1 complex. Increased levels of phosphorylation on Ser-400 also in the presence of EGF, heregulin, IGF, PMA and FBS. Phosphorylation at this site by CDK2 is ligand-independent, and increases nuclear translocation and transcriptional activity. Phosphorylation at Ser-162 and Ser-294, but not at Ser-190, is impaired during the G(2)/M phase of the cell cycle. Phosphorylation on Ser-345 by ERK1/2 MAPK is required for interaction with SP1. Sumoylation is hormone-dependent and represses transcriptional activity. Sumoylation on all three sites is enhanced by PIAS3. Desumoylated by SENP1. Sumoylation on Lys-388, the main site of sumoylation, is repressed by ubiquitination on the same site, and modulated by phosphorylation at Ser-294. In terms of processing, ubiquitination is hormone-dependent and represses sumoylation on the same site. Promoted by MAPK-mediated phosphorylation on Ser-294. Ubiquitinated by UBR5, leading to its degradation: UBR5 specifically recognizes and binds ligand-bound PGR when it is not associated with coactivators (NCOAs). In presence of NCOAs, the UBR5-degron is not accessible, preventing its ubiquitination and degradation. Post-translationally, palmitoylated by ZDHHC7 and ZDHHC21. Palmitoylation is required for plasma membrane targeting and for rapid intracellular signaling via ERK and AKT kinases and cAMP generation.

It is found in the nucleus. The protein resides in the cytoplasm. Functionally, the steroid hormones and their receptors are involved in the regulation of eukaryotic gene expression and affect cellular proliferation and differentiation in target tissues. Transcriptional activator of several progesteron-dependent promoters in a variety of cell types. Involved in activation of SRC-dependent MAPK signaling on hormone stimulation. This is Progesterone receptor (PGR) from Colobus guereza (Mantled guereza).